Here is a 373-residue protein sequence, read N- to C-terminus: Lipoyl synthase (373 aa).

The interval 12 to 36 (HVVSNDHPSSSPLQPGVKQSGEDKI) is disordered. Positions 81, 86, 92, 107, 111, 114, and 323 each coordinate [4Fe-4S] cluster. The Radical SAM core domain occupies 93 to 312 (FSHGTATFMI…EEYGMALGFS (220 aa)). Residues 346 to 373 (PAVSSTEHRERHTIASKSASKTESIRHR) form a disordered region.

This sequence belongs to the radical SAM superfamily. Lipoyl synthase family. The cofactor is [4Fe-4S] cluster.

It localises to the cytoplasm. The catalysed reaction is [[Fe-S] cluster scaffold protein carrying a second [4Fe-4S](2+) cluster] + N(6)-octanoyl-L-lysyl-[protein] + 2 oxidized [2Fe-2S]-[ferredoxin] + 2 S-adenosyl-L-methionine + 4 H(+) = [[Fe-S] cluster scaffold protein] + N(6)-[(R)-dihydrolipoyl]-L-lysyl-[protein] + 4 Fe(3+) + 2 hydrogen sulfide + 2 5'-deoxyadenosine + 2 L-methionine + 2 reduced [2Fe-2S]-[ferredoxin]. It participates in protein modification; protein lipoylation via endogenous pathway; protein N(6)-(lipoyl)lysine from octanoyl-[acyl-carrier-protein]: step 2/2. Functionally, catalyzes the radical-mediated insertion of two sulfur atoms into the C-6 and C-8 positions of the octanoyl moiety bound to the lipoyl domains of lipoate-dependent enzymes, thereby converting the octanoylated domains into lipoylated derivatives. The protein is Lipoyl synthase of Xylella fastidiosa (strain 9a5c).